The primary structure comprises 764 residues: 5-methyltetrahydropteroyltriglutamate--homocysteine methyltransferase (764 aa).

Residues 16 to 19 (RELK) and Lys121 each bind 5-methyltetrahydropteroyltri-L-glutamate. L-homocysteine contacts are provided by residues 440–442 (IGS) and Glu493. L-methionine is bound by residues 440-442 (IGS) and Glu493. Residues 524–525 (RC) and Trp570 contribute to the 5-methyltetrahydropteroyltri-L-glutamate site. Position 608 (Asp608) interacts with L-homocysteine. Asp608 contributes to the L-methionine binding site. Glu614 contacts 5-methyltetrahydropteroyltri-L-glutamate. Residues His650, Cys652, and Glu674 each coordinate Zn(2+). His703 functions as the Proton donor in the catalytic mechanism. Cys735 is a binding site for Zn(2+).

This sequence belongs to the vitamin-B12 independent methionine synthase family. It depends on Zn(2+) as a cofactor.

The catalysed reaction is 5-methyltetrahydropteroyltri-L-glutamate + L-homocysteine = tetrahydropteroyltri-L-glutamate + L-methionine. Its pathway is amino-acid biosynthesis; L-methionine biosynthesis via de novo pathway; L-methionine from L-homocysteine (MetE route): step 1/1. Catalyzes the transfer of a methyl group from 5-methyltetrahydrofolate to homocysteine resulting in methionine formation. The polypeptide is 5-methyltetrahydropteroyltriglutamate--homocysteine methyltransferase (Burkholderia orbicola (strain MC0-3)).